Reading from the N-terminus, the 67-residue chain is Probable pilin MJ1400 (67 aa).

Residues Met1 to Gly13 constitute a propeptide that is removed on maturation. The short motif at Gln14 to Leu22 is the QXSXEXXXL element.

In terms of processing, the N-terminus is cleaved by the prepilin peptidase EppA, which recognizes the class III signal sequence.

It localises to the secreted. Its subcellular location is the cell surface. It is found in the fimbrium. This is Probable pilin MJ1400 from Methanocaldococcus jannaschii (strain ATCC 43067 / DSM 2661 / JAL-1 / JCM 10045 / NBRC 100440) (Methanococcus jannaschii).